The primary structure comprises 591 residues: Developmental and secondary metabolism regulator VEA1 (591 aa).

Residues 1–22 are disordered; that stretch reads MATKASSILHPPNETEHTMSRI. Basic and acidic residues predominate over residues 13-22; sequence NETEHTMSRI. Residues 26 to 235 form the Velvet domain; the sequence is GKKLTYNLKV…AEQGCRVRIR (210 aa). The Nuclear localization signal motif lies at 40 to 45; the sequence is ERARAC. Positions 238-547 are disordered; it reads VRMRRREPKP…TSGGSDDEIM (310 aa). Over residues 245-260 the composition is skewed to basic and acidic residues; sequence PKPNKDYGAYDDRRIT. Positions 306 to 321 are enriched in polar residues; the sequence is HQQPSPNLAATPQSHL. The segment covering 330-347 has biased composition (pro residues); the sequence is YHAPPPPPTAHPAPPPAY. Residues 386–395 show a composition bias toward polar residues; the sequence is YDQSKSSLPM. Over residues 422 to 433 the composition is skewed to low complexity; sequence PSQLHPTQQYQQ. The span at 434–448 shows a compositional bias: pro residues; that stretch reads PTPPPPPPAAIAPHP. The segment at 452–493 is PEST; sequence RTPTKPSPSTFFPPTPSRLSVEVDSSNEADDAILNAIRTRRG. Residues 494 to 516 show a composition bias toward basic and acidic residues; that stretch reads YILDEKSGATKRSRDSSDHDLKP.

Belongs to the velvet family. VeA subfamily. Component of the heterotrimeric velvet complex composed of LAE1, VEA1 and VEL2; VEA1 acting as a bridging protein between LAE1 and VEL2.

It localises to the nucleus. The protein resides in the cytoplasm. In terms of biological role, component of the velvet transcription factor complex that controls sexual/asexual developmental ratio in response to light, promoting sexual development in the darkness while stimulating asexual sporulation under illumination. The velvet complex hat acts as a global regulator for secondary metabolite gene expression. Regulates cleistothecial formation and hyphal growth. Acts as a positive regulator of virulence. The chain is Developmental and secondary metabolism regulator VEA1 from Ajellomyces capsulatus (Darling's disease fungus).